A 160-amino-acid polypeptide reads, in one-letter code: Ribosomal RNA large subunit methyltransferase H (160 aa).

Residues Leu77, Gly109, and 128 to 133 contribute to the S-adenosyl-L-methionine site; that span reads FSRMTF.

This sequence belongs to the RNA methyltransferase RlmH family. In terms of assembly, homodimer.

The protein localises to the cytoplasm. The catalysed reaction is pseudouridine(1915) in 23S rRNA + S-adenosyl-L-methionine = N(3)-methylpseudouridine(1915) in 23S rRNA + S-adenosyl-L-homocysteine + H(+). Functionally, specifically methylates the pseudouridine at position 1915 (m3Psi1915) in 23S rRNA. The sequence is that of Ribosomal RNA large subunit methyltransferase H from Pelotomaculum thermopropionicum (strain DSM 13744 / JCM 10971 / SI).